The primary structure comprises 190 residues: GTP cyclohydrolase 1 (190 aa).

The Zn(2+) site is built by Cys80, His83, and Cys151.

It belongs to the GTP cyclohydrolase I family. Toroid-shaped homodecamer, composed of two pentamers of five dimers.

The enzyme catalyses GTP + H2O = 7,8-dihydroneopterin 3'-triphosphate + formate + H(+). It participates in cofactor biosynthesis; 7,8-dihydroneopterin triphosphate biosynthesis; 7,8-dihydroneopterin triphosphate from GTP: step 1/1. This chain is GTP cyclohydrolase 1 (folE), found in Rickettsia prowazekii (strain Madrid E).